The chain runs to 186 residues: Peptidyl-tRNA hydrolase (186 aa).

Tyrosine 16 is a binding site for tRNA. Histidine 21 serves as the catalytic Proton acceptor. Residues tyrosine 60 and asparagine 62 each contribute to the tRNA site.

This sequence belongs to the PTH family. As to quaternary structure, monomer.

Its subcellular location is the cytoplasm. The enzyme catalyses an N-acyl-L-alpha-aminoacyl-tRNA + H2O = an N-acyl-L-amino acid + a tRNA + H(+). Its function is as follows. Hydrolyzes ribosome-free peptidyl-tRNAs (with 1 or more amino acids incorporated), which drop off the ribosome during protein synthesis, or as a result of ribosome stalling. In terms of biological role, catalyzes the release of premature peptidyl moieties from peptidyl-tRNA molecules trapped in stalled 50S ribosomal subunits, and thus maintains levels of free tRNAs and 50S ribosomes. This is Peptidyl-tRNA hydrolase from Tropheryma whipplei (strain Twist) (Whipple's bacillus).